The chain runs to 181 residues: Adenylate kinase (181 aa).

10 to 15 is an ATP binding site; it reads GAGKGT. The tract at residues 30–59 is NMP; sequence STGDLFRANIGEGTPLGLEAKSYIDAGKLV. Residues T31, R36, 57–59, 85–88, and Q92 contribute to the AMP site; these read KLV and GFPR. The tract at residues 126–132 is LID; it reads ARGRADD. Residue R127 participates in ATP binding. Residues R129 and R140 each contribute to the AMP site. G166 is a binding site for ATP.

It belongs to the adenylate kinase family. Monomer.

It localises to the cytoplasm. The enzyme catalyses AMP + ATP = 2 ADP. It participates in purine metabolism; AMP biosynthesis via salvage pathway; AMP from ADP: step 1/1. Functionally, catalyzes the reversible transfer of the terminal phosphate group between ATP and AMP. Plays an important role in cellular energy homeostasis and in adenine nucleotide metabolism. This chain is Adenylate kinase, found in Corynebacterium aurimucosum (strain ATCC 700975 / DSM 44827 / CIP 107346 / CN-1) (Corynebacterium nigricans).